The sequence spans 348 residues: VIP36-like protein (348 aa).

A signal peptide spans 1–44 (MAATLGPLGSWQQWRRCLSARDGSRMLLLLLLLGSGQGPQQVGA). Residues 45-313 (GQTFEYLKRE…APLPPLSGLA (269 aa)) lie on the Lumenal side of the membrane. In terms of domain architecture, L-type lectin-like spans 49–274 (EYLKREHSLS…DVISLKLFEL (226 aa)). S93 and D128 together coordinate a carbohydrate. Ca(2+) contacts are provided by D159, Y161, and N163. Residue 161-163 (YPN) participates in a carbohydrate binding. An N-linked (GlcNAc...) (high mannose) asparagine glycan is attached at N181. Residue H188 participates in a carbohydrate binding. D191 serves as a coordination point for Ca(2+). C200 and C237 form a disulfide bridge. An a carbohydrate-binding site is contributed by 258 to 260 (GDL). A helical transmembrane segment spans residues 314–336 (LFLIVFFSLVFSVFAIVIGIILY). Topologically, residues 337–348 (NKWQEQSRKRFY) are cytoplasmic. The Endoplasmic reticulum retention signal motif lies at 344 to 346 (RKR).

As to expression, expressed in numerous tissues. Highest expression in skeletal muscle and kidney, intermediate levels in heart, liver and placenta, low levels in brain, thymus, spleen, small intestine and lung.

It localises to the endoplasmic reticulum membrane. Its subcellular location is the golgi apparatus membrane. In terms of biological role, may be involved in the regulation of export from the endoplasmic reticulum of a subset of glycoproteins. May function as a regulator of ERGIC-53. The sequence is that of VIP36-like protein (LMAN2L) from Homo sapiens (Human).